Here is a 349-residue protein sequence, read N- to C-terminus: 4-hydroxy-3-methylbut-2-en-1-yl diphosphate synthase (flavodoxin) (349 aa).

[4Fe-4S] cluster is bound by residues Cys-264, Cys-267, Cys-299, and Glu-306.

Belongs to the IspG family. [4Fe-4S] cluster is required as a cofactor.

The catalysed reaction is (2E)-4-hydroxy-3-methylbut-2-enyl diphosphate + oxidized [flavodoxin] + H2O + 2 H(+) = 2-C-methyl-D-erythritol 2,4-cyclic diphosphate + reduced [flavodoxin]. It functions in the pathway isoprenoid biosynthesis; isopentenyl diphosphate biosynthesis via DXP pathway; isopentenyl diphosphate from 1-deoxy-D-xylulose 5-phosphate: step 5/6. Converts 2C-methyl-D-erythritol 2,4-cyclodiphosphate (ME-2,4cPP) into 1-hydroxy-2-methyl-2-(E)-butenyl 4-diphosphate. This is 4-hydroxy-3-methylbut-2-en-1-yl diphosphate synthase (flavodoxin) from Clostridium perfringens (strain 13 / Type A).